The primary structure comprises 183 residues: Dual-action ribosomal maturation protein DarP (183 aa).

The protein belongs to the DarP family.

It is found in the cytoplasm. Functionally, member of a network of 50S ribosomal subunit biogenesis factors which assembles along the 30S-50S interface, preventing incorrect 23S rRNA structures from forming. Promotes peptidyl transferase center (PTC) maturation. This Shigella boydii serotype 18 (strain CDC 3083-94 / BS512) protein is Dual-action ribosomal maturation protein DarP.